The sequence spans 303 residues: Ribosomal protein uL3 glutamine methyltransferase (303 aa).

The protein belongs to the protein N5-glutamine methyltransferase family. PrmB subfamily.

The enzyme catalyses L-glutaminyl-[ribosomal protein uL3] + S-adenosyl-L-methionine = N(5)-methyl-L-glutaminyl-[ribosomal protein uL3] + S-adenosyl-L-homocysteine + H(+). Its function is as follows. Methylates large ribosomal subunit protein uL3 on a specific glutamine residue. This Neisseria meningitidis serogroup A / serotype 4A (strain DSM 15465 / Z2491) protein is Ribosomal protein uL3 glutamine methyltransferase.